The primary structure comprises 396 residues: Ribosomal RNA large subunit methyltransferase I (396 aa).

The 78-residue stretch at 2 to 79 folds into the PUA domain; that stretch reads SVFIYLVKGR…KEETVDLDFF (78 aa).

This sequence belongs to the methyltransferase superfamily. RlmI family.

The protein localises to the cytoplasm. It carries out the reaction cytidine(1962) in 23S rRNA + S-adenosyl-L-methionine = 5-methylcytidine(1962) in 23S rRNA + S-adenosyl-L-homocysteine + H(+). Functionally, specifically methylates the cytosine at position 1962 (m5C1962) of 23S rRNA. This is Ribosomal RNA large subunit methyltransferase I from Aeromonas salmonicida (strain A449).